We begin with the raw amino-acid sequence, 518 residues long: Ribonuclease Y (518 aa).

Residues 2–22 form a helical membrane-spanning segment; it reads VLNILLAIVGLIVGLGLGFVI. The tract at residues 91-119 is disordered; it reads QREQTLDRKDDSLEKREGSLEEKEEKLGA. The KH domain occupies 208 to 268; the sequence is TVSVVTLPND…IRREIARMTL (61 aa). The region spanning 334–427 is the HD domain; it reads VLNHSIEVAK…VAAADALSAA (94 aa).

Belongs to the RNase Y family.

Its subcellular location is the cell membrane. In terms of biological role, endoribonuclease that initiates mRNA decay. In Enterococcus faecalis (strain ATCC 700802 / V583), this protein is Ribonuclease Y.